Consider the following 314-residue polypeptide: O-antigen chain rhamnosyltransferase RfbN (314 aa).

The protein belongs to the glycosyltransferase 2 family.

The enzyme catalyses alpha-D-galactosyl-di-trans,octa-cis-undecaprenyl diphosphate + dTDP-beta-L-rhamnose = alpha-L-rhamnosyl-(1-&gt;3)-alpha-D-galactosyl-1-diphospho-di-trans,octa-cis-undecaprenol + dTDP + H(+). Its pathway is bacterial outer membrane biogenesis; LPS O-antigen biosynthesis. Its function is as follows. Rhamnosyltransferase involved in the biosynthesis of the repeat unit of the lipopolysaccharide (LPS) O-antigen region. Catalyzes the addition of a rhamnose to the galactosyl-undecaprenyl diphosphate intermediate. This is O-antigen chain rhamnosyltransferase RfbN from Salmonella typhimurium (strain LT2 / SGSC1412 / ATCC 700720).